The sequence spans 522 residues: Ribonuclease Y (522 aa).

The helical transmembrane segment at 3–23 threads the bilayer; sequence ELIMYILATAVVSIGVGIVAG. Residues 212-272 enclose the KH domain; sequence CVSIFNIESD…VRREVARLSL (61 aa). The region spanning 338–431 is the HD domain; sequence LLQHSREVAK…VQVCDAISGA (94 aa).

This sequence belongs to the RNase Y family.

The protein resides in the cell membrane. In terms of biological role, endoribonuclease that initiates mRNA decay. This chain is Ribonuclease Y, found in Cytophaga hutchinsonii (strain ATCC 33406 / DSM 1761 / CIP 103989 / NBRC 15051 / NCIMB 9469 / D465).